A 460-amino-acid chain; its full sequence is Endoglucanase C (460 aa).

The N-terminal stretch at 1 to 32 (MIKGSSLKRFKSLVMAAIFSVSIISTAIASSA) is a signal peptide. Glutamate 99 serves as the catalytic Proton donor. Catalysis depends on aspartate 155, which acts as the Nucleophile. In terms of domain architecture, Dockerin spans 400 to 460 (KPDLKGDVNN…FAQLKVKLLN (61 aa)).

Belongs to the glycosyl hydrolase 8 (cellulase D) family. Monomer. Post-translationally, there are two forms of the cellulase. The shorter form lacks probably the C-terminal reiterated domains.

It catalyses the reaction Endohydrolysis of (1-&gt;4)-beta-D-glucosidic linkages in cellulose, lichenin and cereal beta-D-glucans.. It participates in glycan metabolism; cellulose degradation. The biological conversion of cellulose to glucose generally requires three types of hydrolytic enzymes: (1) Endoglucanases which cut internal beta-1,4-glucosidic bonds; (2) Exocellobiohydrolases that cut the disaccharide cellobiose from the non-reducing end of the cellulose polymer chain; (3) Beta-1,4-glucosidases which hydrolyze the cellobiose and other short cello-oligosaccharides to glucose. The chain is Endoglucanase C (celCCC) from Ruminiclostridium cellulolyticum (strain ATCC 35319 / DSM 5812 / JCM 6584 / H10) (Clostridium cellulolyticum).